A 267-amino-acid chain; its full sequence is MTKITKIEVQKNNKERFNLFLDEVFEMGIDIDTLVRFNLKKGQILEPSDMENIQKYEHYRLGINMAIQYLSYKKRTEKEVRQHLQQNEISDIAIQQVIDYCYRESYINHEDYAESLKNTMINTTDKGPEIFRQKLYQVGIEPNIINTYVPIYEEEQSFEAVIEVAKKIMKTKKGPEIKIRQKVLQSLIQKGYSMDVVQQAIAELNFEQDENILDDLLQKDLEKVYTKQRRKYDGQQLVMKTIESLMRKGYKYDKIKSKLEESGILDE.

This sequence belongs to the RecX family.

It is found in the cytoplasm. Modulates RecA activity. In Staphylococcus haemolyticus (strain JCSC1435), this protein is Regulatory protein RecX.